A 510-amino-acid chain; its full sequence is Maturase K (510 aa).

This sequence belongs to the intron maturase 2 family. MatK subfamily.

The protein resides in the plastid. It localises to the chloroplast. Its function is as follows. Usually encoded in the trnK tRNA gene intron. Probably assists in splicing its own and other chloroplast group II introns. This Mammillaria haageana (Cactus) protein is Maturase K.